Reading from the N-terminus, the 170-residue chain is Shikimate kinase (170 aa).

Residue 15–20 (GAGKTT) coordinates ATP. Thr19 contributes to the Mg(2+) binding site. Substrate-binding residues include Asp37, Arg61, and Gly83. Arg121 is a binding site for ATP. Residue Arg140 participates in substrate binding.

The protein belongs to the shikimate kinase family. As to quaternary structure, monomer. It depends on Mg(2+) as a cofactor.

Its subcellular location is the cytoplasm. It carries out the reaction shikimate + ATP = 3-phosphoshikimate + ADP + H(+). Its pathway is metabolic intermediate biosynthesis; chorismate biosynthesis; chorismate from D-erythrose 4-phosphate and phosphoenolpyruvate: step 5/7. In terms of biological role, catalyzes the specific phosphorylation of the 3-hydroxyl group of shikimic acid using ATP as a cosubstrate. The protein is Shikimate kinase of Neisseria meningitidis serogroup C (strain 053442).